A 314-amino-acid polypeptide reads, in one-letter code: Taste receptor type 2 member 42 (314 aa).

Over methionine 1–lysine 7 the chain is Extracellular. A helical transmembrane segment spans residues isoleucine 8–glycine 28. Residues leucine 29 to cysteine 50 lie on the Cytoplasmic side of the membrane. A helical transmembrane segment spans residues leucine 51–leucine 71. At alanine 72–threonine 101 the chain is on the extracellular side. Residues cysteine 102–leucine 122 form a helical membrane-spanning segment. At arginine 123–asparagine 127 the chain is on the cytoplasmic side. A helical transmembrane segment spans residues glycine 128–leucine 148. At glutamate 149 to leucine 187 the chain is on the extracellular side. An N-linked (GlcNAc...) asparagine glycan is attached at asparagine 163. A helical membrane pass occupies residues threonine 188–valine 208. Residues arginine 209–serine 238 are Cytoplasmic-facing. A helical transmembrane segment spans residues phenylalanine 239–methionine 259. Residues leucine 260 to tyrosine 265 lie on the Extracellular side of the membrane. Residues isoleucine 266–leucine 286 traverse the membrane as a helical segment. Residues glycine 287 to leucine 314 lie on the Cytoplasmic side of the membrane.

The protein belongs to the G-protein coupled receptor T2R family.

It localises to the membrane. Functionally, receptor that may play a role in the perception of bitterness and is gustducin-linked. May play a role in sensing the chemical composition of the gastrointestinal content. The activity of this receptor may stimulate alpha gustducin, mediate PLC-beta-2 activation and lead to the gating of TRPM5. The polypeptide is Taste receptor type 2 member 42 (TAS2R42) (Pan paniscus (Pygmy chimpanzee)).